Reading from the N-terminus, the 188-residue chain is MDNKENKLDEKKIFKNNKIEEKKENLIDAITVQNQKIENLKLKLLQNQKKINDIELRKLANIENIKKNTEEKIEKIKKTEIERFLKSIIPVIDSLEDILNLSTTVDIKDQPIIKGIELTLESLLNILNKLGVKIEGQKNKVFNPDIHELVSRELSKETLPNHVISVNKKGFTFNKIVLRKASVIVAEN.

It belongs to the GrpE family. As to quaternary structure, homodimer.

Its subcellular location is the cytoplasm. Its function is as follows. Participates actively in the response to hyperosmotic and heat shock by preventing the aggregation of stress-denatured proteins, in association with DnaK and GrpE. It is the nucleotide exchange factor for DnaK and may function as a thermosensor. Unfolded proteins bind initially to DnaJ; upon interaction with the DnaJ-bound protein, DnaK hydrolyzes its bound ATP, resulting in the formation of a stable complex. GrpE releases ADP from DnaK; ATP binding to DnaK triggers the release of the substrate protein, thus completing the reaction cycle. Several rounds of ATP-dependent interactions between DnaJ, DnaK and GrpE are required for fully efficient folding. This is Protein GrpE 2 from Buchnera aphidicola subsp. Acyrthosiphon pisum (strain APS) (Acyrthosiphon pisum symbiotic bacterium).